We begin with the raw amino-acid sequence, 287 residues long: Orotidine 5'-phosphate decarboxylase (287 aa).

Lys-97 serves as the catalytic Proton donor.

The protein belongs to the OMP decarboxylase family. Type 2 subfamily.

It carries out the reaction orotidine 5'-phosphate + H(+) = UMP + CO2. The protein operates within pyrimidine metabolism; UMP biosynthesis via de novo pathway; UMP from orotate: step 2/2. This chain is Orotidine 5'-phosphate decarboxylase (pyrF), found in Clostridium perfringens (strain 13 / Type A).